The sequence spans 322 residues: Phosphatidylglycerol--prolipoprotein diacylglyceryl transferase (322 aa).

3 helical membrane-spanning segments follow: residues 23 to 43 (VYPIAILMGMIISILTVAFFW), 53 to 73 (FFALLFIIIPSSIIGARLWFV), and 97 to 117 (GLSIQGGVALPAILSLVYIYF). An a 1,2-diacyl-sn-glycero-3-phospho-(1'-sn-glycerol)-binding site is contributed by Arg-143. Transmembrane regions (helical) follow at residues 191-211 (PLFLYESISSIIGYIIIVWII) and 250-270 (LAAMFSILIGGMMMIYFEIWA).

It belongs to the Lgt family.

It is found in the cell membrane. It carries out the reaction L-cysteinyl-[prolipoprotein] + a 1,2-diacyl-sn-glycero-3-phospho-(1'-sn-glycerol) = an S-1,2-diacyl-sn-glyceryl-L-cysteinyl-[prolipoprotein] + sn-glycerol 1-phosphate + H(+). It participates in protein modification; lipoprotein biosynthesis (diacylglyceryl transfer). Functionally, catalyzes the transfer of the diacylglyceryl group from phosphatidylglycerol to the sulfhydryl group of the N-terminal cysteine of a prolipoprotein, the first step in the formation of mature lipoproteins. In Mycoplasmopsis pulmonis (strain UAB CTIP) (Mycoplasma pulmonis), this protein is Phosphatidylglycerol--prolipoprotein diacylglyceryl transferase.